A 390-amino-acid polypeptide reads, in one-letter code: Mannitol-1-phosphate 5-dehydrogenase (390 aa).

7–18 (AVHFGGGNIGRG) serves as a coordination point for NAD(+). Residue Lys-216 is part of the active site.

This sequence belongs to the mannitol dehydrogenase family. In terms of assembly, monomer.

The catalysed reaction is D-mannitol 1-phosphate + NAD(+) = beta-D-fructose 6-phosphate + NADH + H(+). Its function is as follows. Catalyzes the NAD(H)-dependent interconversion of D-fructose 6-phosphate and D-mannitol 1-phosphate in the mannitol metabolic pathway. Required for the process of sporulation on senescing leaf material. This is Mannitol-1-phosphate 5-dehydrogenase (mpd1) from Phaeosphaeria nodorum (strain SN15 / ATCC MYA-4574 / FGSC 10173) (Glume blotch fungus).